The sequence spans 135 residues: HTH-type transcriptional regulator CueR (135 aa).

The HTH merR-type domain occupies 1-69 (MNISDVAKIT…LEESGELVNL (69 aa)). Residues 4–23 (SDVAKITGLTSKAIRFYEEK) constitute a DNA-binding region (H-T-H motif). Cu(+)-binding residues include Cys112 and Cys120.

Homodimer.

It is found in the cytoplasm. Regulates the transcription of the copA and cueO genes. It detects cytoplasmic copper stress and activates transcription in response to increasing copper concentrations. In Escherichia coli O157:H7, this protein is HTH-type transcriptional regulator CueR (cueR).